We begin with the raw amino-acid sequence, 427 residues long: N-myc proto-oncogene protein (427 aa).

Disordered stretches follow at residues 45–79 (FELLPTPPLSPSRPAPGAPSGRGPGAVGRSGSVGL), 144–173 (EKLQNKTPAAPPPPPGTAGSPPVPARSGRA), 195–255 (AAEG…STNK), and 297–349 (APSP…RNHN). Composition is skewed to pro residues over residues 49–61 (PTPPLSPSRPAPG) and 152–167 (AAPPPPPGTAGSPPVP). The segment covering 210–221 (RASSSSSSSGDD) has biased composition (low complexity). Over residues 222–242 (TLSDSEDDEDEEEEDEEEEID) the composition is skewed to acidic residues. Residues S224 and S226 each carry the phosphoserine; by CK2 modification. The bHLH domain maps to 343-396 (ERRRNHNILERQRANDLRSSFLTLRDHVLSELVQNEKAAKVVILKKATEYVHSL). Positions 396–417 (LQAEEQKLLLEKEKLQARQEQL) are leucine-zipper.

Efficient DNA binding requires dimerization with another bHLH protein. Binds DNA as a heterodimer with MAX.

The protein localises to the nucleus. In Serinus canaria (Island canary), this protein is N-myc proto-oncogene protein (MYCN).